Consider the following 154-residue polypeptide: Mediator of RNA polymerase II transcription subunit 21 (154 aa).

The disordered stretch occupies residues 37 to 71 (GFERTGSQTPQQQVHQQQQLPQQQQQQQQPQQQED). Residues 44–71 (QTPQQQVHQQQQLPQQQQQQQQPQQQED) show a composition bias toward low complexity. Residues 96–140 (SEESSIELQVQSLQRLEAENKESAEKLEEIVRKGELLLEKIQAAL) are a coiled coil.

The protein belongs to the Mediator complex subunit 21 family. As to quaternary structure, component of the Mediator complex.

It is found in the nucleus. Functionally, component of the Mediator complex, a coactivator involved in the regulated transcription of nearly all RNA polymerase II-dependent genes. Mediator functions as a bridge to convey information from gene-specific regulatory proteins to the basal RNA polymerase II transcription machinery. Mediator is recruited to promoters by direct interactions with regulatory proteins and serves as a scaffold for the assembly of a functional preinitiation complex with RNA polymerase II and the general transcription factors. The chain is Mediator of RNA polymerase II transcription subunit 21 (MED21) from Anopheles gambiae (African malaria mosquito).